A 715-amino-acid polypeptide reads, in one-letter code: Fatty acid oxidation complex subunit alpha (715 aa).

The segment at 1-190 is enoyl-CoA hydratase/isomerase; that stretch reads MIYEGKAITV…KVGAVDAVVA (190 aa). Asp297 is a substrate binding site. The tract at residues 312–715 is 3-hydroxyacyl-CoA dehydrogenase; it reads KDVKQAAVLG…MAKNGQSFFG (404 aa). NAD(+) is bound by residues Met325, Asp344, 401–403, Lys408, and Ser430; that span reads VVE. The For 3-hydroxyacyl-CoA dehydrogenase activity role is filled by His451. Asn454 contributes to the NAD(+) binding site. Substrate is bound by residues Asn501 and Tyr660.

The protein in the N-terminal section; belongs to the enoyl-CoA hydratase/isomerase family. It in the C-terminal section; belongs to the 3-hydroxyacyl-CoA dehydrogenase family. Heterotetramer of two alpha chains (FadB) and two beta chains (FadA).

The catalysed reaction is a (3S)-3-hydroxyacyl-CoA + NAD(+) = a 3-oxoacyl-CoA + NADH + H(+). It catalyses the reaction a (3S)-3-hydroxyacyl-CoA = a (2E)-enoyl-CoA + H2O. The enzyme catalyses a 4-saturated-(3S)-3-hydroxyacyl-CoA = a (3E)-enoyl-CoA + H2O. It carries out the reaction (3S)-3-hydroxybutanoyl-CoA = (3R)-3-hydroxybutanoyl-CoA. The catalysed reaction is a (3Z)-enoyl-CoA = a 4-saturated (2E)-enoyl-CoA. It catalyses the reaction a (3E)-enoyl-CoA = a 4-saturated (2E)-enoyl-CoA. It functions in the pathway lipid metabolism; fatty acid beta-oxidation. Functionally, involved in the aerobic and anaerobic degradation of long-chain fatty acids via beta-oxidation cycle. Catalyzes the formation of 3-oxoacyl-CoA from enoyl-CoA via L-3-hydroxyacyl-CoA. It can also use D-3-hydroxyacyl-CoA and cis-3-enoyl-CoA as substrate. This is Fatty acid oxidation complex subunit alpha from Pseudomonas fluorescens (strain ATCC BAA-477 / NRRL B-23932 / Pf-5).